A 387-amino-acid chain; its full sequence is Cyclin-B1-4 (387 aa).

The tract at residues 1–29 (MASSRVSDLPHQRGIAGEIKPKNVAGHGR) is disordered.

The protein belongs to the cyclin family. Cyclin AB subfamily.

This chain is Cyclin-B1-4 (CYCB1-4), found in Arabidopsis thaliana (Mouse-ear cress).